The following is a 394-amino-acid chain: S-adenosylmethionine synthase 1 (394 aa).

Glu11 contributes to the Mg(2+) binding site. His17 is an ATP binding site. Residue Glu45 coordinates K(+). L-methionine-binding residues include Glu58 and Gln101. Residues 169–171 (DGK), 237–240 (SGRF), Asp248, 254–255 (RK), Ala271, Lys275, and Lys279 each bind ATP. Residue Asp248 coordinates L-methionine. Lys279 is a binding site for L-methionine.

Belongs to the AdoMet synthase family. As to quaternary structure, homotetramer. Requires Mn(2+) as cofactor. Mg(2+) serves as cofactor. Co(2+) is required as a cofactor. The cofactor is K(+).

Its subcellular location is the cytoplasm. It carries out the reaction L-methionine + ATP + H2O = S-adenosyl-L-methionine + phosphate + diphosphate. Its pathway is amino-acid biosynthesis; S-adenosyl-L-methionine biosynthesis; S-adenosyl-L-methionine from L-methionine: step 1/1. Catalyzes the formation of S-adenosylmethionine from methionine and ATP. The reaction comprises two steps that are both catalyzed by the same enzyme: formation of S-adenosylmethionine (AdoMet) and triphosphate, and subsequent hydrolysis of the triphosphate. The sequence is that of S-adenosylmethionine synthase 1 (SAMS1) from Triticum monococcum (Einkorn wheat).